A 447-amino-acid chain; its full sequence is N-succinylarginine dihydrolase (447 aa).

Substrate contacts are provided by residues Ala-19 to Ser-28, Asn-110, and His-137 to Arg-138. The active site involves Glu-174. Residue Arg-212 participates in substrate binding. The active site involves His-248. The substrate site is built by Asp-250 and Asn-359. Cys-365 acts as the Nucleophile in catalysis.

This sequence belongs to the succinylarginine dihydrolase family. In terms of assembly, homodimer.

The catalysed reaction is N(2)-succinyl-L-arginine + 2 H2O + 2 H(+) = N(2)-succinyl-L-ornithine + 2 NH4(+) + CO2. The protein operates within amino-acid degradation; L-arginine degradation via AST pathway; L-glutamate and succinate from L-arginine: step 2/5. In terms of biological role, catalyzes the hydrolysis of N(2)-succinylarginine into N(2)-succinylornithine, ammonia and CO(2). The chain is N-succinylarginine dihydrolase from Escherichia fergusonii (strain ATCC 35469 / DSM 13698 / CCUG 18766 / IAM 14443 / JCM 21226 / LMG 7866 / NBRC 102419 / NCTC 12128 / CDC 0568-73).